The primary structure comprises 103 residues: MPAKIRQNDEVIVLTGKDKGKRGKVTKVLPNGKVFVEGINIITKHEKPVPALGKAGGLVKKEAAIDASNVAIFNPKTNKADRVGFRFEDGKKVRFFKSNNEII.

Belongs to the universal ribosomal protein uL24 family. In terms of assembly, part of the 50S ribosomal subunit.

Functionally, one of two assembly initiator proteins, it binds directly to the 5'-end of the 23S rRNA, where it nucleates assembly of the 50S subunit. One of the proteins that surrounds the polypeptide exit tunnel on the outside of the subunit. The polypeptide is Large ribosomal subunit protein uL24 (Haemophilus influenzae (strain ATCC 51907 / DSM 11121 / KW20 / Rd)).